We begin with the raw amino-acid sequence, 174 residues long: UPF0316 protein lmo1776 (174 aa).

A run of 3 helical transmembrane segments spans residues 4–24 (GIFI…IYTV), 36–56 (LAAL…SLVL), and 62–82 (IANV…GMKI).

This sequence belongs to the UPF0316 family.

The protein resides in the cell membrane. The protein is UPF0316 protein lmo1776 of Listeria monocytogenes serovar 1/2a (strain ATCC BAA-679 / EGD-e).